We begin with the raw amino-acid sequence, 280 residues long: Transcription factor HES-1 (280 aa).

The interval 1 to 44 (MPADIMEKNSSSPVAATPASVNTTPDKPKTASEHRKSSKPIMEK) is disordered. Residues 10-21 (SSSPVAATPASV) are compositionally biased toward low complexity. Residues 26–35 (DKPKTASEHR) are compositionally biased toward basic and acidic residues. The bHLH domain occupies 34-91 (HRKSSKPIMEKRRRARINESLSQLKTLILDALKKDSSRHSKLEKADILEMTVKHLRNL). An Orange domain is found at 110–143 (YRAGFSECMNEVTRFLSTCEGVNTEVRTRLLGHL). 2 disordered regions span residues 157–200 (GQPH…PPGG) and 254–280 (TSVG…PWRN). Pro residues-rich tracts occupy residues 164–174 (QAPPPPPPGPG) and 181–200 (FAPP…PPGG). The span at 254-271 (TSVGPNAVSPSSGPSLTA) shows a compositional bias: polar residues. The WRPW motif motif lies at 275–278 (WRPW).

As to quaternary structure, transcription repression requires formation of a complex with a corepressor protein of the Groucho/TLE family. Interacts (via WPRW motif) with TLE1, and more weakly with TLE2. Interacts with HES6. Interacts with SIRT1. Interacts with an FA complex, composed of FANCA, FANCF, FANCG and FANCL, but not of FANCC, nor FANCE. Post-translationally, (Microbial infection) Ubiquitinated via human cytomegalovirus/HCMV protein IE1 that assembles a HES1 ubiquitination complex; leading to HES1 proteasomal degradation.

The protein localises to the nucleus. In terms of biological role, transcriptional repressor of genes that require a bHLH protein for their transcription. May act as a negative regulator of myogenesis by inhibiting the functions of MYOD1 and ASH1. Binds DNA on N-box motifs: 5'-CACNAG-3' with high affinity and on E-box motifs: 5'-CANNTG-3' with low affinity. May play a role in a functional FA core complex response to DNA cross-link damage, being required for the stability and nuclear localization of FA core complex proteins, as well as for FANCD2 monoubiquitination in response to DNA damage. This chain is Transcription factor HES-1 (HES1), found in Homo sapiens (Human).